The sequence spans 238 residues: EKC/KEOPS complex subunit SPAP27G11.07c (238 aa).

The Protein kinase domain maps to E20–G238. ATP contacts are provided by residues V26–T34 and K48. Residue D148 is the Proton acceptor of the active site.

It belongs to the protein kinase superfamily. BUD32 family. Component of the EKC/KEOPS complex composed of at least SPAP27G11.07c/BUD32, cgi121, gon7, pgp2 and SPAC4H3.13/PCC1; the whole complex dimerizes.

The protein localises to the cytoplasm. It is found in the nucleus. It localises to the chromosome. The protein resides in the telomere. It catalyses the reaction L-seryl-[protein] + ATP = O-phospho-L-seryl-[protein] + ADP + H(+). The enzyme catalyses L-threonyl-[protein] + ATP = O-phospho-L-threonyl-[protein] + ADP + H(+). Functionally, component of the EKC/KEOPS complex that is required for the formation of a threonylcarbamoyl group on adenosine at position 37 (t(6)A37) in tRNAs that read codons beginning with adenine. The complex is probably involved in the transfer of the threonylcarbamoyl moiety of threonylcarbamoyl-AMP (TC-AMP) to the N6 group of A37. BUD32 has ATPase activity in the context of the EKC/KEOPS complex and likely plays a supporting role to the catalytic subunit KAE1. The EKC/KEOPS complex also promotes both telomere uncapping and telomere elongation. The complex is required for efficient recruitment of transcriptional coactivators. The sequence is that of EKC/KEOPS complex subunit SPAP27G11.07c from Schizosaccharomyces pombe (strain 972 / ATCC 24843) (Fission yeast).